Here is a 206-residue protein sequence, read N- to C-terminus: Large ribosomal subunit protein uL4 (206 aa).

The segment at 63–98 (MYRQKGTGRARHSSARAPQFRGGGKAHGPVPHSHAH) is disordered. Residues 64–76 (YRQKGTGRARHSS) are compositionally biased toward basic residues.

The protein belongs to the universal ribosomal protein uL4 family. As to quaternary structure, part of the 50S ribosomal subunit.

Functionally, one of the primary rRNA binding proteins, this protein initially binds near the 5'-end of the 23S rRNA. It is important during the early stages of 50S assembly. It makes multiple contacts with different domains of the 23S rRNA in the assembled 50S subunit and ribosome. Its function is as follows. Forms part of the polypeptide exit tunnel. The sequence is that of Large ribosomal subunit protein uL4 from Chelativorans sp. (strain BNC1).